We begin with the raw amino-acid sequence, 231 residues long: Lipoprotein-releasing system ATP-binding protein LolD (231 aa).

One can recognise an ABC transporter domain in the interval 6–230; sequence LSCKNVSKKY…DGELELVINS (225 aa). 42–49 is an ATP binding site; that stretch reads GLSGSGKT.

This sequence belongs to the ABC transporter superfamily. Lipoprotein translocase (TC 3.A.1.125) family. As to quaternary structure, the complex is composed of two ATP-binding proteins (LolD) and two transmembrane proteins (LolC and LolE).

The protein localises to the cell inner membrane. In terms of biological role, part of the ABC transporter complex LolCDE involved in the translocation of mature outer membrane-directed lipoproteins, from the inner membrane to the periplasmic chaperone, LolA. Responsible for the formation of the LolA-lipoprotein complex in an ATP-dependent manner. The protein is Lipoprotein-releasing system ATP-binding protein LolD of Francisella tularensis subsp. tularensis (strain FSC 198).